Consider the following 305-residue polypeptide: Olfactory receptor 4B13 (305 aa).

The Extracellular portion of the chain corresponds to 1-25 (MANKNNVTELIFTGLFQDPEVQKVC). N-linked (GlcNAc...) asparagine glycosylation occurs at Asn-6. The chain crosses the membrane as a helical span at residues 26–46 (FVLFLPVYLATLLGNSLILVA). The Cytoplasmic segment spans residues 47–55 (VSISKTLHS). The helical transmembrane segment at 56–76 (PMYFFLSSLSLVEICYSSTIV) threads the bilayer. Topologically, residues 77 to 95 (PKFITDLLAKVKTISLKGC) are extracellular. Cys-95 and Cys-187 are joined by a disulfide. The chain crosses the membrane as a helical span at residues 96–116 (LTQIFFSHFFGVVEVILLVVM). Over 117-141 (AYDRYVAICKPLHYMNIMSRQVCHM) the chain is Cytoplasmic. The chain crosses the membrane as a helical span at residues 142–162 (LVAGSWLGGFIHSIIQIIITI). Over 163-202 (PLPFCGPNVIDHYFCDLQQLFKLACTDTFMEGFIVMANSG) the chain is Extracellular. A helical membrane pass occupies residues 203–223 (LISIVSLFILVSSYAVILISL). The Cytoplasmic segment spans residues 224–236 (RKRSAEGRRKALS). A helical transmembrane segment spans residues 237 to 257 (TCASHITVVILFFVPGAFIYM). At 258–266 (RPSSTFTED) the chain is on the extracellular side. The chain crosses the membrane as a helical span at residues 267–287 (KLVSVFYTVITPMLNPIVYTL). At 288–305 (RNTEMKNAIRMSWKQKDS) the chain is on the cytoplasmic side.

This sequence belongs to the G-protein coupled receptor 1 family.

It is found in the cell membrane. In terms of biological role, odorant receptor. The protein is Olfactory receptor 4B13 of Mus musculus (Mouse).